The chain runs to 201 residues: Protein S40-5 (201 aa).

Disordered regions lie at residues 1-39 (MARGRKLTMSQSERYLGSSYSYGDSNGNSATDESELTEE) and 134-178 (SIHE…EGVG). A compositionally biased stretch (low complexity) spans 17-29 (GSSYSYGDSNGNS).

This sequence belongs to the senescence regulator S40 family.

The protein localises to the cytoplasm. This is Protein S40-5 from Arabidopsis thaliana (Mouse-ear cress).